The following is a 969-amino-acid chain: Protein translocase subunit SecA (969 aa).

Residues Q99, G117–T121, and D631 each bind ATP.

Belongs to the SecA family. In terms of assembly, monomer and homodimer. Part of the essential Sec protein translocation apparatus which comprises SecA, SecYEG and auxiliary proteins SecDF. Other proteins may also be involved.

The protein resides in the cell inner membrane. Its subcellular location is the cytoplasm. The enzyme catalyses ATP + H2O + cellular proteinSide 1 = ADP + phosphate + cellular proteinSide 2.. Functionally, part of the Sec protein translocase complex. Interacts with the SecYEG preprotein conducting channel. Has a central role in coupling the hydrolysis of ATP to the transfer of proteins into and across the cell membrane, serving as an ATP-driven molecular motor driving the stepwise translocation of polypeptide chains across the membrane. This chain is Protein translocase subunit SecA, found in Chlamydia trachomatis serovar D (strain ATCC VR-885 / DSM 19411 / UW-3/Cx).